A 226-amino-acid polypeptide reads, in one-letter code: Protein AhpA (226 aa).

The next 2 helical transmembrane spans lie at 12–32 and 169–189; these read SMIS…LFGV and GELI…HYFL.

This sequence belongs to the Smp family.

It localises to the cell inner membrane. Its function is as follows. When anaerobically expressed in wild-type E.coli K12 confers a hemolytic phenotype, but not in an sheA mutant. Suggests it affects the expression of the latent E.coli K12 hemolysin sheA under anaerobic conditions. The sequence is that of Protein AhpA (ahpA) from Pasteurella multocida (strain Pm70).